Consider the following 245-residue polypeptide: Cuticle protein (245 aa).

In terms of domain architecture, Chitin-binding type R&amp;R spans 25–86; it reads VSYAAAPALV…TGDSKSQQES (62 aa). The tract at residues 79–100 is disordered; sequence DSKSQQESRSGDVVQGSYSVVD. 3 tandem repeats follow at residues 92–95, 108–111, and 118–121.

Component of the cuticle of African malaria mosquito. This is Cuticle protein (Ccp84Ab) from Anopheles gambiae (African malaria mosquito).